Consider the following 624-residue polypeptide: Polycystin-2-like protein 2 (624 aa).

Residues 1-31 are Cytoplasmic-facing; the sequence is MAEASRWHRGGASKHKLHYRKEVEITTTLQE. The helical transmembrane segment at 32–52 threads the bilayer; that stretch reads LLLYFIFLINLCILTFGMVNP. Residues 53 to 276 lie on the Extracellular side of the membrane; it reads HMYYLNKVMS…YSVKLLRYVS (224 aa). N-linked (GlcNAc...) asparagine glycosylation is found at asparagine 115 and asparagine 138. Residues 277-297 form a helical membrane-spanning segment; it reads YYDYFIASCEITFCIFLFVFT. The Cytoplasmic segment spans residues 298–314; the sequence is TQEVKKIKEFKSAYFKS. Residues 315–335 traverse the membrane as a helical segment; the sequence is IWNWLELLLLLLCFVAVSFNT. The Extracellular segment spans residues 336-360; the sequence is YYNVQIFLLLGQLLKSTEKYSDFYF. The chain crosses the membrane as a helical span at residues 361 to 381; sequence LACWHIYYNNIIAITIFFAWI. The Cytoplasmic portion of the chain corresponds to 382-406; that stretch reads KIFKFISFNKTMSQLSSTLSRCVKD. Residues 407–427 traverse the membrane as a helical segment; that stretch reads IVGFAIMFFIIFFAYAQLGFL. Residues 428 to 469 lie on the Extracellular side of the membrane; it reads VFGSQVDDFSTFQNSIFAQFRIVLGDFNFAGIQQANPILGPI. The helical transmembrane segment at 470–490 threads the bilayer; it reads YFITFIFFVFFVLLNMFLAII. The Cytoplasmic segment spans residues 491 to 624; sequence NDTYSEVKAD…NQVVRKVSAL (134 aa). The stretch at 556 to 576 forms a coiled coil; it reads ENEIQNAEQMKKWKERLEKKY.

The protein belongs to the polycystin family. Interacts with TRPC1 and TRPC5. In terms of tissue distribution, expressed only in testis. Expressed also in brain and kidney. As to expression, expressed only in transformed lymphoblasts.

The protein localises to the membrane. Its function is as follows. Exhibits a lower single conductance but no spontaneous channel activity. May function as a regulator of calcium channels or a channel component involving Ca2(+) homeostasis. In Homo sapiens (Human), this protein is Polycystin-2-like protein 2.